Reading from the N-terminus, the 72-residue chain is UPF0426 protein asl4034 (72 aa).

The protein belongs to the UPF0426 family.

The protein is UPF0426 protein asl4034 of Nostoc sp. (strain PCC 7120 / SAG 25.82 / UTEX 2576).